We begin with the raw amino-acid sequence, 1107 residues long: Unconventional myosin-Ie (1107 aa).

Positions 19 to 692 (SGVDDMVLLS…SLFLLEEMRE (674 aa)) constitute a Myosin motor domain. 112-119 (GESGAGKT) lines the ATP pocket. The tract at residues 581-591 (PHYIRCIKPNE) is actin-binding. In terms of domain architecture, IQ spans 695–724 (YDGYARVIQKTWRKFVARKKYVQMREEASD). A TH1 domain is found at 730–922 (KERRRNSINR…NKVLQVSIGP (193 aa)). The tract at residues 919 to 1052 (SIGPGLPKNS…KPQPKPKPQV (134 aa)) is disordered. Polar residues-rich tracts occupy residues 979 to 989 (NQRSNQKSLYT) and 998 to 1012 (RQQSTGSDRLSQTPE). A Phosphoserine modification is found at Ser-1001. Pro residues predominate over residues 1034–1051 (RPPPAGGRPKPQPKPKPQ). One can recognise an SH3 domain in the interval 1050–1107 (PQVPQCKALYAYDAQDTDELSFNANDIIDIIKEDPSGWWTGRLRGKQGLFPNNYVTKI).

The protein belongs to the TRAFAC class myosin-kinesin ATPase superfamily. Myosin family. Interacts with CALM and F-actin. Interacts (via SH3 domain) with SYNJ1, DNM1 and DNM2. Interacts with ARL14EP. Interacts with CARMIL1. In terms of tissue distribution, detected in kidney glomeruli (at protein level). Detected in utricle.

It is found in the cytoplasm. The protein resides in the cell junction. It localises to the cytoplasmic vesicle. The protein localises to the clathrin-coated vesicle. Its subcellular location is the cytoskeleton. Functionally, myosins are actin-based motor molecules with ATPase activity. Unconventional myosins serve in intracellular movements. Their highly divergent tails bind to membranous compartments, which are then moved relative to actin filaments. Binds to membranes containing anionic phospholipids via its tail domain. Involved in clathrin-mediated endocytosis and intracellular movement of clathrin-coated vesicles. Required for normal morphology of the glomerular basement membrane, normal development of foot processes by kidney podocytes and normal kidney function. In dendritic cells, may control the movement of class II-containing cytoplasmic vesicles along the actin cytoskeleton by connecting them with the actin network via ARL14EP and ARL14. This is Unconventional myosin-Ie (Myo1e) from Mus musculus (Mouse).